Consider the following 1049-residue polypeptide: Protein argonaute 12 (1049 aa).

Residues 1-53 (MSSRGGGGGGRRGGRGGGGGREGGGGGGGGGGRGGQGRGDLGVVGERQGGGRG) show a composition bias toward gly residues. Disordered stretches follow at residues 1–101 (MSSR…GVQV) and 144–192 (GGAP…KAVT). Basic and acidic residues predominate over residues 54–65 (AGERGGRHDAPR). Over residues 66–76 (GRGGVAVGAGA) the composition is skewed to gly residues. Low complexity predominate over residues 144-160 (GGAPPAGQGSSLAAAQG). Residues 404 to 515 (PVMDFAVQYL…LPMEVCSILE (112 aa)) form the PAZ domain. The Piwi domain occupies 694 to 1012 (LLIVILTEIS…GAFRARYYME (319 aa)).

It belongs to the argonaute family. Ago subfamily.

Its function is as follows. Probably involved in the RNA silencing pathway. May bind to short RNAs such as microRNAs (miRNAs) or short interfering RNAs (siRNAs), and represses the translation of mRNAs which are complementary to them. The chain is Protein argonaute 12 (AGO12) from Oryza sativa subsp. japonica (Rice).